Reading from the N-terminus, the 458-residue chain is UDP-N-acetylmuramoylalanine--D-glutamate ligase (458 aa).

Residue 119 to 125 (GSNGKTT) coordinates ATP.

The protein belongs to the MurCDEF family.

Its subcellular location is the cytoplasm. It carries out the reaction UDP-N-acetyl-alpha-D-muramoyl-L-alanine + D-glutamate + ATP = UDP-N-acetyl-alpha-D-muramoyl-L-alanyl-D-glutamate + ADP + phosphate + H(+). It functions in the pathway cell wall biogenesis; peptidoglycan biosynthesis. In terms of biological role, cell wall formation. Catalyzes the addition of glutamate to the nucleotide precursor UDP-N-acetylmuramoyl-L-alanine (UMA). The protein is UDP-N-acetylmuramoylalanine--D-glutamate ligase of Limosilactobacillus fermentum (strain NBRC 3956 / LMG 18251) (Lactobacillus fermentum).